A 124-amino-acid chain; its full sequence is MPFHLAPYLAKSVPGVGVLGALVGGAAALAKNVRLLKEKRITNTEAAIDTGKETVGAGLATALSAVAATAVGGGLVVSLGTALVAGVAAKYAWDRGVDLVEKELNRGKAANGASDEDILRDELA.

Residues 2–8 are Cytoplasmic-facing; it reads PFHLAPY. Residues 9-29 traverse the membrane as a helical segment; the sequence is LAKSVPGVGVLGALVGGAAAL. Topologically, residues 30-64 are lumenal; that stretch reads AKNVRLLKEKRITNTEAAIDTGKETVGAGLATALS. The MIC, when fused with the C-terminus of maltose-binding protein (MBP) or expressed as a fragment, improves quality of iron particles during precipitation experiments, binds magnetite stretch occupies residues 36–56; that stretch reads LKEKRITNTEAAIDTGKETVG. Residues 65–85 traverse the membrane as a helical segment; the sequence is AVAATAVGGGLVVSLGTALVA. Residues 86 to 124 are Cytoplasmic-facing; the sequence is GVAAKYAWDRGVDLVEKELNRGKAANGASDEDILRDELA.

Belongs to the magnetosome MamC family. As to quaternary structure, probably interacts with MamA.

Its subcellular location is the magnetosome membrane. In terms of biological role, probably involved in magnetite crystal growth. The lumenal domain may bind the magnetite crystals, affecting crystal size and shape. The protein is Magnetosome protein MamC of Paramagnetospirillum magneticum (strain ATCC 700264 / AMB-1) (Magnetospirillum magneticum).